A 513-amino-acid chain; its full sequence is Mannosyl-oligosaccharide alpha-1,2-mannosidase 1B (513 aa).

Positions 1 to 21 are cleaved as a signal peptide; the sequence is MHLPSLSLSLTALAIASPSAA. N-linked (GlcNAc...) asparagine glycans are attached at residues asparagine 97, asparagine 117, asparagine 150, asparagine 184, asparagine 251, asparagine 322, asparagine 348, and asparagine 368. Cysteine 334 and cysteine 363 are disulfide-bonded. The active-site Proton donor is the glutamate 377. Residue threonine 503 coordinates Ca(2+).

The protein belongs to the glycosyl hydrolase 47 family. Monomer. It depends on Ca(2+) as a cofactor. Mg(2+) is required as a cofactor.

The protein resides in the cytoplasmic vesicle lumen. The enzyme catalyses N(4)-(alpha-D-Man-(1-&gt;2)-alpha-D-Man-(1-&gt;2)-alpha-D-Man-(1-&gt;3)-[alpha-D-Man-(1-&gt;2)-alpha-D-Man-(1-&gt;3)-[alpha-D-Man-(1-&gt;2)-alpha-D-Man-(1-&gt;6)]-alpha-D-Man-(1-&gt;6)]-beta-D-Man-(1-&gt;4)-beta-D-GlcNAc-(1-&gt;4)-beta-D-GlcNAc)-L-asparaginyl-[protein] (N-glucan mannose isomer 9A1,2,3B1,2,3) + 4 H2O = N(4)-(alpha-D-Man-(1-&gt;3)-[alpha-D-Man-(1-&gt;3)-[alpha-D-Man-(1-&gt;6)]-alpha-D-Man-(1-&gt;6)]-beta-D-Man-(1-&gt;4)-beta-D-GlcNAc-(1-&gt;4)-beta-D-GlcNAc)-L-asparaginyl-[protein] (N-glucan mannose isomer 5A1,2) + 4 beta-D-mannose. It catalyses the reaction N(4)-(alpha-D-Man-(1-&gt;2)-alpha-D-Man-(1-&gt;2)-alpha-D-Man-(1-&gt;3)-[alpha-D-Man-(1-&gt;3)-[alpha-D-Man-(1-&gt;2)-alpha-D-Man-(1-&gt;6)]-alpha-D-Man-(1-&gt;6)]-beta-D-Man-(1-&gt;4)-beta-D-GlcNAc-(1-&gt;4)-beta-D-GlcNAc)-L-asparaginyl-[protein] (N-glucan mannose isomer 8A1,2,3B1,3) + 3 H2O = N(4)-(alpha-D-Man-(1-&gt;3)-[alpha-D-Man-(1-&gt;3)-[alpha-D-Man-(1-&gt;6)]-alpha-D-Man-(1-&gt;6)]-beta-D-Man-(1-&gt;4)-beta-D-GlcNAc-(1-&gt;4)-beta-D-GlcNAc)-L-asparaginyl-[protein] (N-glucan mannose isomer 5A1,2) + 3 beta-D-mannose. It functions in the pathway protein modification; protein glycosylation. Functionally, involved in the maturation of Asn-linked oligosaccharides. Progressively trims alpha-1,2-linked mannose residues from Man(9)GlcNAc(2) to produce Man(5)GlcNAc(2). The protein is Mannosyl-oligosaccharide alpha-1,2-mannosidase 1B (mns1B) of Aspergillus phoenicis (Aspergillus saitoi).